Here is a 163-residue protein sequence, read N- to C-terminus: Urease accessory protein UreE (163 aa).

Residues 144–163 are disordered; sequence QPEPGAYGGSSAGSHDGHHH.

This sequence belongs to the UreE family.

It is found in the cytoplasm. Involved in urease metallocenter assembly. Binds nickel. Probably functions as a nickel donor during metallocenter assembly. The sequence is that of Urease accessory protein UreE from Aliivibrio fischeri (strain MJ11) (Vibrio fischeri).